We begin with the raw amino-acid sequence, 178 residues long: Ribosome maturation factor RimM (178 aa).

Positions Ala-100 to Leu-173 constitute a PRC barrel domain.

Belongs to the RimM family. As to quaternary structure, binds ribosomal protein uS19.

It is found in the cytoplasm. An accessory protein needed during the final step in the assembly of 30S ribosomal subunit, possibly for assembly of the head region. Essential for efficient processing of 16S rRNA. May be needed both before and after RbfA during the maturation of 16S rRNA. It has affinity for free ribosomal 30S subunits but not for 70S ribosomes. The chain is Ribosome maturation factor RimM from Roseiflexus castenholzii (strain DSM 13941 / HLO8).